Reading from the N-terminus, the 356-residue chain is Viral cathepsin (356 aa).

Residues 1 to 40 (MYANALVCLNPSFIKLQFHIVCTMNIIGIVTLALCSAASA) form the signal peptide. Residues 41 to 144 (ADEGAAYNLQ…IILNQPPDKG (104 aa)) constitute a propeptide, activation peptide. Disulfide bonds link C165/C206, C199/C239, and C295/C343. C168 is a catalytic residue. Catalysis depends on residues H302 and N322.

It belongs to the peptidase C1 family. Post-translationally, synthesized as an inactive proenzyme and activated by proteolytic removal of the inhibitory propeptide.

The enzyme catalyses Endopeptidase of broad specificity, hydrolyzing substrates of both cathepsin L and cathepsin B.. In terms of biological role, cysteine protease that plays an essential role in host liquefaction to facilitate horizontal transmission of the virus. May participate in the degradation of foreign protein expressed by the baculovirus system. The polypeptide is Viral cathepsin (VCATH) (Lepidoptera (butterflies and moths)).